Reading from the N-terminus, the 588-residue chain is CD166 antigen (588 aa).

A signal peptide spans 1 to 33 (MMEPPAAAARASCRRRPLLCLLLAALCMPPALG). 2 Ig-like V-type domains span residues 34–126 (LYTV…TEDD) and 131–240 (PTVV…KTIQ). Residues 34–532 (LYTVNAVYGD…NSEKVNDQAK (499 aa)) lie on the Extracellular side of the membrane. Intrachain disulfides connect C49–C119 and C163–C226. N101, N173, N199, N271, N312, N366, N462, N485, and N504 each carry an N-linked (GlcNAc...) asparagine glycan. Ig-like C2-type domains follow at residues 251 to 333 (PTEK…TTIT), 338 to 414 (DLQL…KTLK), and 421 to 501 (PQIK…RTVT). Intrachain disulfides connect C276–C319, C359–C397, and C440–C490. The chain crosses the membrane as a helical span at residues 533 to 553 (LIVGIVVGLLLVALVAGVVYW). The Cytoplasmic segment spans residues 554 to 588 (LYVKKSKTASKHVDKDLGNIEENKKLEENNHKSET).

In terms of assembly, homodimer. Interacts (via extracellular domain) with CD6 (via extracellular domain). Homodimerization and interaction with CD6 involve the same region and cannot occur simultaneously. The affinity for CD6 is much higher than the affinity for self-association. Glycosylated. As to expression, detected in embryo. Detected in embryonic spinal cord and embryonic brain. Within the spinal cord it is localized to axons in the dorsal funiculus, midline floor plate cells, and motoneurons. Detected in embryonic epithelia and brain. After hatching, detected in bursa of Fabricius and thymus. Detected on embryonic retinal ganglion cell axon growth cones (at protein level). Detected in embryonic retina and in the optic fiber layer, which is composed of retinal ganglion cell axons and their growth cones.

It localises to the cell membrane. It is found in the cell projection. The protein resides in the axon. Its subcellular location is the dendrite. In terms of biological role, cell adhesion molecule that mediates both heterotypic cell-cell contacts via its interaction with CD6, as well as homotypic cell-cell contacts. Promotes T-cell activation and proliferation via its interactions with CD6. Contributes to the formation and maturation of the immunological synapse via its interactions with CD6. Mediates homotypic interactions with cells that express ALCAM. Mediates attachment of dendritic cells onto endothelial cells via homotypic interaction. Inhibits endothelial cell migration and promotes endothelial tube formation via homotypic interactions. Required for normal organization of the lymph vessel network. Required for normal hematopoietic stem cell engraftment in the bone marrow. Plays a role in hematopoiesis; required for normal numbers of hematopoietic stem cells in bone marrow. Promotes in vitro osteoblast proliferation and differentiation. Promotes neurite extension, axon growth and axon guidance; axons grow preferentially on surfaces that contain ALCAM. Mediates outgrowth and pathfinding for retinal ganglion cell axons. The sequence is that of CD166 antigen (ALCAM) from Gallus gallus (Chicken).